The primary structure comprises 320 residues: Elongation factor Ts (320 aa).

The segment at 82–85 is involved in Mg(2+) ion dislocation from EF-Tu; the sequence is TDFV.

The protein belongs to the EF-Ts family.

It localises to the cytoplasm. In terms of biological role, associates with the EF-Tu.GDP complex and induces the exchange of GDP to GTP. It remains bound to the aminoacyl-tRNA.EF-Tu.GTP complex up to the GTP hydrolysis stage on the ribosome. The sequence is that of Elongation factor Ts from Flavobacterium johnsoniae (strain ATCC 17061 / DSM 2064 / JCM 8514 / BCRC 14874 / CCUG 350202 / NBRC 14942 / NCIMB 11054 / UW101) (Cytophaga johnsonae).